Consider the following 399-residue polypeptide: Elongation factor Tu (399 aa).

The tr-type G domain occupies 10 to 204; it reads KDHVNIGTIG…AVDDYIDTPE (195 aa). Residues 19–26 form a G1 region; that stretch reads GHVDHGKT. 19-26 lines the GTP pocket; the sequence is GHVDHGKT. Position 26 (Thr-26) interacts with Mg(2+). Positions 60–64 are G2; that stretch reads GITIN. The segment at 81–84 is G3; it reads DCPG. Residues 81–85 and 136–139 each bind GTP; these read DCPGH and NKKD. A G4 region spans residues 136–139; the sequence is NKKD. A G5 region spans residues 174–176; it reads SAL.

It belongs to the TRAFAC class translation factor GTPase superfamily. Classic translation factor GTPase family. EF-Tu/EF-1A subfamily. Monomer.

The protein resides in the cytoplasm. The catalysed reaction is GTP + H2O = GDP + phosphate + H(+). Its function is as follows. GTP hydrolase that promotes the GTP-dependent binding of aminoacyl-tRNA to the A-site of ribosomes during protein biosynthesis. The chain is Elongation factor Tu from Synechocystis sp. (strain ATCC 27184 / PCC 6803 / Kazusa).